A 273-amino-acid chain; its full sequence is Progestin and adipoQ receptor family member 4 (273 aa).

6 helical membrane-spanning segments follow: residues 52–72 (IYTH…TMPW), 79–99 (GWLG…SVLY), 115–135 (LLAL…LPII), 147–167 (PAAL…ALTA), 185–205 (LLVF…SLPC), and 245–265 (LLSV…LLWA).

This sequence belongs to the ADIPOR family. In terms of assembly, interacts with CERS2 and CERS5; the interaction regulates CERS2 and CERS5 stabilities and activities and is inhibited in presence of ceramides. Relatively widely expressed in a range of tissues. Expressed in subcutaneous white adipose tissue.

The protein localises to the golgi apparatus membrane. Its function is as follows. Plays a role in maintaining adipose tissue function through the regulation of ceramide levels. Mediates the stability of ceramide synthetases, CERS2 and CERS5, and their activities. The polypeptide is Progestin and adipoQ receptor family member 4 (Homo sapiens (Human)).